The following is a 200-amino-acid chain: MKIGIIAYQGSFEEHFLQLKRAFDKLSLNGEIISIKIPKDLKGVDGVIIPGGESTTIGLVAKRLGLLDELKEKITSGLPVLGTCAGAIMLAKEVSDAKVGKTSQPLIGTMNISVIRNYYGRQKESFEAIVDLSKIGKDKAHVVFIRAPAIAKVWGKAQSLAELNGVTVFAEENNMLATTFHPELSDTTSIHEYFLHLVKG.

Residue 52–54 (GES) participates in L-glutamine binding. Residue C84 is the Nucleophile of the active site. Residues R116 and 145 to 146 (IR) each bind L-glutamine. Residues H181 and E183 each act as charge relay system in the active site.

The protein belongs to the glutaminase PdxT/SNO family. In terms of assembly, in the presence of PdxS, forms a dodecamer of heterodimers. Only shows activity in the heterodimer.

The enzyme catalyses aldehydo-D-ribose 5-phosphate + D-glyceraldehyde 3-phosphate + L-glutamine = pyridoxal 5'-phosphate + L-glutamate + phosphate + 3 H2O + H(+). It carries out the reaction L-glutamine + H2O = L-glutamate + NH4(+). It functions in the pathway cofactor biosynthesis; pyridoxal 5'-phosphate biosynthesis. In terms of biological role, catalyzes the hydrolysis of glutamine to glutamate and ammonia as part of the biosynthesis of pyridoxal 5'-phosphate. The resulting ammonia molecule is channeled to the active site of PdxS. The protein is Pyridoxal 5'-phosphate synthase subunit PdxT of Saccharolobus solfataricus (strain ATCC 35092 / DSM 1617 / JCM 11322 / P2) (Sulfolobus solfataricus).